We begin with the raw amino-acid sequence, 691 residues long: T-box transcription factor TBX2-B (691 aa).

The T-box DNA-binding region spans 104–277; it reads LWDQFHKIGT…HNPFAKGFRD (174 aa). Disordered stretches follow at residues 301-440 and 612-691; these read CKAD…SLSK and NLLT…ESPK. Low complexity predominate over residues 325–335; the sequence is HSPLSAAPSPL. Composition is skewed to basic and acidic residues over residues 340–361, 378–402, and 415–433; these read TNRE…EVRS, RLED…RKDG, and SLEK…KSDP. Low complexity predominate over residues 624-639; it reads PGSESSKPGSSRESSP. Residues 659-684 adopt a coiled-coil conformation; it reads SMKDSINELQRIQRLVSGLERQREVS. Positions 678–691 are enriched in basic and acidic residues; that stretch reads ERQREVSPGRESPK.

In terms of assembly, binds DNA as a monomer.

It localises to the nucleus. Functionally, transcription factor which acts as a transcriptional repressor. May also function as a transcriptional activator. Binds to the palindromic T site 5'-TTCACACCTAGGTGTGAA-3' DNA sequence, or a half-site, which are present in the regulatory region of several genes. This Xenopus laevis (African clawed frog) protein is T-box transcription factor TBX2-B (tbx2-b).